Here is a 337-residue protein sequence, read N- to C-terminus: Anthranilate phosphoribosyltransferase (337 aa).

Residues Gly81, 84-85 (GD), Ser89, 91-94 (NVST), 109-117 (KHGNRALSS), and Ala121 each bind 5-phospho-alpha-D-ribose 1-diphosphate. Gly81 contacts anthranilate. A Mg(2+)-binding site is contributed by Ser93. Asn112 is an anthranilate binding site. Arg167 contacts anthranilate. Positions 226 and 227 each coordinate Mg(2+).

Belongs to the anthranilate phosphoribosyltransferase family. In terms of assembly, homodimer. Requires Mg(2+) as cofactor.

The enzyme catalyses N-(5-phospho-beta-D-ribosyl)anthranilate + diphosphate = 5-phospho-alpha-D-ribose 1-diphosphate + anthranilate. Its pathway is amino-acid biosynthesis; L-tryptophan biosynthesis; L-tryptophan from chorismate: step 2/5. In terms of biological role, catalyzes the transfer of the phosphoribosyl group of 5-phosphorylribose-1-pyrophosphate (PRPP) to anthranilate to yield N-(5'-phosphoribosyl)-anthranilate (PRA). This Nitrobacter hamburgensis (strain DSM 10229 / NCIMB 13809 / X14) protein is Anthranilate phosphoribosyltransferase.